Consider the following 185-residue polypeptide: Ribosome-recycling factor (185 aa).

It belongs to the RRF family.

Its subcellular location is the cytoplasm. Responsible for the release of ribosomes from messenger RNA at the termination of protein biosynthesis. May increase the efficiency of translation by recycling ribosomes from one round of translation to another. The protein is Ribosome-recycling factor of Halalkalibacterium halodurans (strain ATCC BAA-125 / DSM 18197 / FERM 7344 / JCM 9153 / C-125) (Bacillus halodurans).